Consider the following 669-residue polypeptide: DNA mismatch repair protein MutL (669 aa).

The tract at residues Glu-361–Gly-409 is disordered. 2 stretches are compositionally biased toward polar residues: residues Val-363–Tyr-384 and Thr-393–Thr-402.

It belongs to the DNA mismatch repair MutL/HexB family.

This protein is involved in the repair of mismatches in DNA. It is required for dam-dependent methyl-directed DNA mismatch repair. May act as a 'molecular matchmaker', a protein that promotes the formation of a stable complex between two or more DNA-binding proteins in an ATP-dependent manner without itself being part of a final effector complex. In Proteus mirabilis (strain HI4320), this protein is DNA mismatch repair protein MutL.